The following is a 142-amino-acid chain: Organic hydroperoxide resistance protein-like 2 (142 aa).

This sequence belongs to the OsmC/Ohr family.

The sequence is that of Organic hydroperoxide resistance protein-like 2 from Staphylococcus saprophyticus subsp. saprophyticus (strain ATCC 15305 / DSM 20229 / NCIMB 8711 / NCTC 7292 / S-41).